The following is a 607-amino-acid chain: T-box transcription factor TBX18 (607 aa).

An Engrailed homology 1 repressor motif is present at residues 18–28 (HAFSVEALIGA). The tract at residues 30–141 (KQQQLQKKRR…PLPSPQAPRV (112 aa)) is disordered. The Nuclear localization signal motif lies at 36-40 (KKRRK). The span at 44-53 (EEAAGAVDDG) shows a compositional bias: low complexity. The T-box DNA-binding region spans 143–330 (LQGAELWKRF…RNPFAKGFRD (188 aa)).

In terms of assembly, homodimer. Can form a heterodimer with TBX15. Interacts with GATA4 and NKX2-5. Interacts with PAX3. Interacts (via engrailed homology 1 repressor motif) with TLE3; this interaction represses TBX18 transcriptional activity. Interacts with SIX1.

It localises to the nucleus. Acts as a transcriptional repressor involved in developmental processes of a variety of tissues and organs, including the heart and coronary vessels, the ureter and the vertebral column. Required for embryonic development of the sino atrial node (SAN) head area. The polypeptide is T-box transcription factor TBX18 (TBX18) (Homo sapiens (Human)).